A 345-amino-acid chain; its full sequence is Serine proteinase inhibitor 2 (345 aa).

It belongs to the serpin family. Poxviruses subfamily.

It is found in the host cytoplasm. In terms of biological role, viral serpin that inhibits both cysteine and serine proteinases involved in the regulation of host inflammatory and apoptosis processes. Major anti-apoptotic protein which inhibits both intrinsic and extrinsic pathways and strongly cleaves host CASP1 and CASP8 but is a rather poor inhibitor of host CASP3. Prevents the proteolytic activity of host interleukin-1-beta converting enzyme (ICE) and ICE-like enzymes. Can also block apoptosis through host tumor necrosis factor (TNF) receptor. The inhibition of host ICE is an example of a 'cross-class' interaction, in which a serpin inhibits a non-serine proteinase. Also inhibits granzyme B. The polypeptide is Serine proteinase inhibitor 2 (OPG199) (Vaccinia virus (strain Western Reserve) (VACV)).